Here is a 251-residue protein sequence, read N- to C-terminus: Glutamate 5-kinase (251 aa).

Residue lysine 7 coordinates ATP. Residues serine 45, aspartate 130, and asparagine 142 each contribute to the substrate site. ATP-binding positions include 162-163 (SD) and 204-210 (TGGIVTK).

The protein belongs to the glutamate 5-kinase family.

It localises to the cytoplasm. The catalysed reaction is L-glutamate + ATP = L-glutamyl 5-phosphate + ADP. Its pathway is amino-acid biosynthesis; L-proline biosynthesis; L-glutamate 5-semialdehyde from L-glutamate: step 1/2. In terms of biological role, catalyzes the transfer of a phosphate group to glutamate to form L-glutamate 5-phosphate. In Campylobacter jejuni subsp. jejuni serotype O:6 (strain 81116 / NCTC 11828), this protein is Glutamate 5-kinase.